Reading from the N-terminus, the 326-residue chain is Beta-ketoacyl-[acyl-carrier-protein] synthase III (326 aa).

Residues cysteine 112 and histidine 251 contribute to the active site. The tract at residues 252–256 is ACP-binding; that stretch reads QANSR. Residue asparagine 281 is part of the active site.

Belongs to the thiolase-like superfamily. FabH family. In terms of assembly, homodimer.

The protein resides in the cytoplasm. It catalyses the reaction malonyl-[ACP] + acetyl-CoA + H(+) = 3-oxobutanoyl-[ACP] + CO2 + CoA. It functions in the pathway lipid metabolism; fatty acid biosynthesis. In terms of biological role, catalyzes the condensation reaction of fatty acid synthesis by the addition to an acyl acceptor of two carbons from malonyl-ACP. Catalyzes the first condensation reaction which initiates fatty acid synthesis and may therefore play a role in governing the total rate of fatty acid production. Possesses both acetoacetyl-ACP synthase and acetyl transacylase activities. Its substrate specificity determines the biosynthesis of branched-chain and/or straight-chain of fatty acids. The sequence is that of Beta-ketoacyl-[acyl-carrier-protein] synthase III from Clostridium botulinum (strain Loch Maree / Type A3).